Reading from the N-terminus, the 740-residue chain is Zinc finger CCCH domain-containing protein 14 (740 aa).

4 disordered regions span residues 82–240 (SNKQ…NIKG), 254–314 (VSAG…DDAV), 390–426 (ITPS…DDEE), and 444–469 (SFRD…HHST). Composition is skewed to basic and acidic residues over residues 87–158 (ETSK…EIQR) and 176–185 (EHVRARGEKH). A compositionally biased stretch (basic residues) spans 186–200 (DRHHHKDHRRGRSHE). Positions 204 to 214 (ITSTIVRQASA) are enriched in polar residues. The span at 393-409 (SRDSTPTDDSPTMQKWN) shows a compositional bias: polar residues. Acidic residues predominate over residues 414-426 (IGDDSEESEDDEE). 2 consecutive C3H1-type zinc fingers follow at residues 499–522 (HVKE…MHPT) and 523–543 (TNCK…IHPP). Positions 623–661 (IKKKPAPGAESEKKEEKSDENESKAEEPKAEVAPVQPKP) are disordered. The span at 632-652 (ESEKKEEKSDENESKAEEPKA) shows a compositional bias: basic and acidic residues. 3 consecutive C3H1-type zinc fingers follow at residues 668–691 (LHSM…KHPK), 674–691 (CRYA…KHPK), and 693–709 (CRFG…FYHK).

The protein belongs to the ZC3H14 family.

It is found in the nucleus. The protein localises to the cytoplasm. Its function is as follows. RNA-binding protein involved in the biogenesis of circular RNAs (circRNAs), which are produced by back-splicing circularization of pre-mRNAs. This chain is Zinc finger CCCH domain-containing protein 14 (sut-2), found in Caenorhabditis elegans.